The following is a 158-amino-acid chain: Ribonuclease H (158 aa).

The RNase H type-1 domain occupies 3-144 (ELKLIHIFTD…CDQLARAAAE (142 aa)). Residues Asp12, Glu50, Asp72, and Asp136 each coordinate Mg(2+).

This sequence belongs to the RNase H family. In terms of assembly, monomer. Mg(2+) is required as a cofactor.

It localises to the cytoplasm. It carries out the reaction Endonucleolytic cleavage to 5'-phosphomonoester.. Endonuclease that specifically degrades the RNA of RNA-DNA hybrids. In Shewanella sp. (strain MR-7), this protein is Ribonuclease H.